The primary structure comprises 531 residues: Zinc finger C2HC domain-containing protein 1C (531 aa).

The disordered stretch occupies residues 16-45 (MLPHNTTEAPGPHSAKQDSYEQSDSSQQSL). Positions 35 to 44 (YEQSDSSQQS) are enriched in low complexity. A coiled-coil region spans residues 209–264 (VQIRRLEAAGESLEEEIRRKQILLRGKLKKTEEELRRIQTQKEQAKENENRELQKI). Disordered stretches follow at residues 290-318 (FEEEFSRDKREDETWERSQQNSSPFQLSD) and 334-387 (NKIR…PQLG). A compositionally biased stretch (basic and acidic residues) spans 293–305 (EFSRDKREDETWE). Positions 306 to 315 (RSQQNSSPFQ) are enriched in polar residues. Residues 335 to 345 (KIRDRVSEPSM) show a composition bias toward basic and acidic residues. The segment covering 366–380 (SSLSMAPDSSGSSGS) has biased composition (low complexity). C2HC/C3H-type zinc fingers lie at residues 385 to 414 (QLGECSHCGRKFLLFRLERHSNICSRMQGS) and 493 to 522 (DYIQCPHCSHHFAPKVAEQHIPKCKTIKNR). Residues cysteine 389, cysteine 392, histidine 404, cysteine 408, cysteine 497, cysteine 500, histidine 512, and cysteine 516 each contribute to the Zn(2+) site.

This sequence belongs to the ZC2HC1 family. Zn(2+) is required as a cofactor.

The protein is Zinc finger C2HC domain-containing protein 1C (ZC2HC1C) of Macaca fascicularis (Crab-eating macaque).